Consider the following 1175-residue polypeptide: Atrophin-1 (1175 aa).

3 disordered regions span residues 1–595, 608–752, and 770–847; these read MKTR…VTTS, SSPA…ARFN, and VPLE…HRPP. Residues 16 to 32 carry the Nuclear localization signal motif; sequence RKKEAPGPREELRSRGR. The segment covering 17-29 has biased composition (basic and acidic residues); the sequence is KKEAPGPREELRS. Ser34 is modified (phosphoserine). Basic and acidic residues predominate over residues 45-63; that stretch reads GKAEKSRQTAKKARIEEPS. Ser77, Ser79, Ser101, Ser103, and Ser107 each carry phosphoserine. A compositionally biased stretch (basic and acidic residues) spans 108 to 128; that stretch reads LDGRSINDDGSSDPRDIDQDN. Residues 129 to 152 are compositionally biased toward polar residues; it reads RSTSPSIYSPGSVENDSDSSSGLS. Pro residues-rich tracts occupy residues 158–174 and 208–217; these read PYHPPPLFPPSPPPPDS and GPPPGAPPTH. 2 stretches are compositionally biased toward low complexity: residues 240 to 253 and 262 to 273; these read GAAASSVGAPSGGK and IPISSSGASGAP. The segment covering 345-374 has biased composition (pro residues); that stretch reads PPGPEKGPTLAPSPHPLPPASSSAPGPPMR. Residues 378 to 396 are compositionally biased toward low complexity; it reads SSSSSSAAASSSSSSSSAS. The span at 416 to 437 shows a compositional bias: polar residues; the sequence is SMSVSNQPPKYTQPSLPSQAVW. Residues 476–491 are compositionally biased toward basic residues; it reads THHHHQQQPQQQHHHG. The interval 503 to 553 is involved in binding BAIAP2; that stretch reads HPLESSNSHHAHPYNMSPSLGSLRPYPPGPAHLPPPHGQVSYNQAGPNGPP. A compositionally biased stretch (pro residues) spans 527–539; sequence PYPPGPAHLPPPH. Residues 547-584 are compositionally biased toward low complexity; that stretch reads AGPNGPPVSSSNSSGSSSQASYSCSHPSSSQGPQGASY. Ser617 is subject to Phosphoserine. An N6-acetyllysine modification is found at Lys626. Thr638 is modified (phosphothreonine). Ser646 is subject to Phosphoserine. A Phosphothreonine modification is found at Thr654. Composition is skewed to pro residues over residues 693-703 and 722-737; these read LPPPPAAPTTG and PESPVPPARSPSPPPK. Residue Ser724 is modified to Phosphoserine; by MAPK8. Phosphoserine occurs at positions 731 and 733. Positions 780–824 are enriched in basic and acidic residues; the sequence is KRADLVEKVRREAEQRAREEKEREREREREKEREREKERELERSV. Residues 864-879 form a required for interaction with FAT1 region; sequence DTPALRTLSEYARPHV. Ser881 is subject to Phosphoserine. The segment at 913–932 is disordered; it reads PAAREREREARERDLRDRLK. The segment covering 914 to 932 has biased composition (basic and acidic residues); it reads AAREREREARERDLRDRLK. The Nuclear export signal motif lies at 1018-1026; sequence ALGNDPLAR. The residue at position 1100 (Arg1100) is an Asymmetric dimethylarginine. Lys1168 is covalently cross-linked (Glycyl lysine isopeptide (Lys-Gly) (interchain with G-Cter in SUMO2)).

Interacts with BAIAP2, WWP1, WWP2, WWP3 and RERE. Interacts (via its N-terminus) with MTG8; the interaction enhances transcriptional repression of MTG8. Interacts with PQBP1. Interacts with NR2E1; the interaction represses the transcriptional activity of NR2E1. Interacts with FAT1 (via a C-terminal domain). Phosphorylated in vitro by MAPK8/JNK1 on Ser-724. In terms of tissue distribution, widely expressed. Most abundant in the brain.

Its subcellular location is the cytoplasm. It localises to the perinuclear region. The protein localises to the cell junction. The protein resides in the nucleus. Its function is as follows. Transcriptional corepressor. Corepressor of MTG8 transcriptional repression. Has some intrinsic repression activity which is independent of the number of the poly-Q repeats. Recruits NR2E1 to repress transcription. Promotes vascular smooth cell (VSMC) migration and orientation. This chain is Atrophin-1 (Atn1), found in Mus musculus (Mouse).